The primary structure comprises 90 residues: UPF0367 protein Npun_R4552 (90 aa).

It belongs to the UPF0367 family.

The polypeptide is UPF0367 protein Npun_R4552 (Nostoc punctiforme (strain ATCC 29133 / PCC 73102)).